The primary structure comprises 212 residues: Peptide methionine sulfoxide reductase MsrA (212 aa).

Cys52 is an active-site residue.

The protein belongs to the MsrA Met sulfoxide reductase family.

It catalyses the reaction L-methionyl-[protein] + [thioredoxin]-disulfide + H2O = L-methionyl-(S)-S-oxide-[protein] + [thioredoxin]-dithiol. The enzyme catalyses [thioredoxin]-disulfide + L-methionine + H2O = L-methionine (S)-S-oxide + [thioredoxin]-dithiol. Has an important function as a repair enzyme for proteins that have been inactivated by oxidation. Catalyzes the reversible oxidation-reduction of methionine sulfoxide in proteins to methionine. The protein is Peptide methionine sulfoxide reductase MsrA of Escherichia coli (strain ATCC 8739 / DSM 1576 / NBRC 3972 / NCIMB 8545 / WDCM 00012 / Crooks).